Reading from the N-terminus, the 294-residue chain is tRNA-uridine aminocarboxypropyltransferase 1 (294 aa).

The segment at 158-185 (DMQNDSSCEPSLKRPKCSQQYDKSKNEG) is disordered. Residues 202–205 (DSTW) carry the DXTW motif.

The protein belongs to the TDD superfamily. DTWD1 family.

It is found in the nucleus. It carries out the reaction a uridine in tRNA + S-adenosyl-L-methionine = a 3-[(3S)-3-amino-3-carboxypropyl]uridine in tRNA + S-methyl-5'-thioadenosine + H(+). Functionally, catalyzes the formation of 3-(3-amino-3-carboxypropyl)uridine (acp3U) at position 20 in the D-loop of several cytoplasmic tRNAs (acp3U(20)). In Xenopus tropicalis (Western clawed frog), this protein is tRNA-uridine aminocarboxypropyltransferase 1.